The primary structure comprises 256 residues: Inner membrane transport permease YadH (256 aa).

At 1–22 (MMHLYWVALKSIWAKEIHRFMR) the chain is on the periplasmic side. Residues 22 to 251 (RIWVQTLVPP…LICWSLIQRG (230 aa)) enclose the ABC transmembrane type-2 domain. Residues 23–43 (IWVQTLVPPVITMTLYFIIFG) form a helical membrane-spanning segment. Topologically, residues 44–52 (NLIGSRIGD) are cytoplasmic. A helical membrane pass occupies residues 53–73 (MHGFSYMQFIVPGLIMMSVIT). The Periplasmic segment spans residues 74 to 94 (NAYANVASSFFGAKFQRNIEE). A helical membrane pass occupies residues 95–115 (LLVAPVPTHVIIAGYVGGGVA). Arg-116 is a topological domain (cytoplasmic). Residues 117–137 (GLFVGILVTAISLFFVPFQVH) form a helical membrane-spanning segment. Position 138 (Ser-138) is a topological domain, periplasmic. The helical transmembrane segment at 139–159 (WVFVALTLVLTAVLFSLAGLL) threads the bilayer. Topologically, residues 160-169 (NGVFAKTFDD) are cytoplasmic. A helical transmembrane segment spans residues 170-190 (ISLVPTFVLTPLTYLGGVFYS). Topologically, residues 191–223 (LTLLPPFWQGLSHLNPIVYMISGFRYGFLGIND) are periplasmic. The helical transmembrane segment at 224-244 (VPLVTTFGVLVVFIVAFYLIC) threads the bilayer. The Cytoplasmic portion of the chain corresponds to 245 to 256 (WSLIQRGRGLRS).

The protein belongs to the ABC-2 integral membrane protein family.

It is found in the cell inner membrane. The protein is Inner membrane transport permease YadH (yadH) of Escherichia coli O157:H7.